A 128-amino-acid polypeptide reads, in one-letter code: Small ribosomal subunit protein eS6 (128 aa).

The protein belongs to the eukaryotic ribosomal protein eS6 family.

The chain is Small ribosomal subunit protein eS6 from Methanobrevibacter smithii (strain ATCC 35061 / DSM 861 / OCM 144 / PS).